The sequence spans 473 residues: H(+)/Cl(-) exchange transporter ClcA (473 aa).

The Cytoplasmic segment spans residues 1 to 32; sequence MKTDTPSLETPQAARLRRRQLIRQLLERDKTP. A helical membrane pass occupies residues 33 to 69; it reads LAILFMAAVVGTLVGLAAVAFDKGVAWLQNQRMGALV. Residues 70–76 lie on the Periplasmic side of the membrane; it reads HTADNYP. A helical transmembrane segment spans residues 77-100; it reads LLLTVAFLCSAVLAMFGYFLVRKY. A Selectivity filter part_1 motif is present at residues 106–110; that stretch reads GSGIP. Position 107 (Ser-107) interacts with chloride. The helical intramembrane region spans 109-116; it reads IPEIEGAL. The Cytoplasmic portion of the chain corresponds to 117 to 123; sequence EDQRPVR. The next 2 membrane-spanning stretches (helical) occupy residues 124–141 and 148–166; these read WWRVLPVKFFGGLGTLGG and EGPTVQIGGNIGRMVLDIF. The Selectivity filter part_2 signature appears at 146–150; it reads GREGP. Residues 167 to 176 are Cytoplasmic-facing; it reads RLKGDEARHT. Intramembrane regions (helical) lie at residues 177–189 and 193–201; these read LLATGAAAGLAAA and PLAGILFII. Topologically, residues 202–214 are cytoplasmic; sequence EEMRPQFRYTLIS. A helical transmembrane segment spans residues 215 to 232; sequence IKAVFIGVIMSTIMYRIF. At 233 to 252 the chain is on the periplasmic side; that stretch reads NHEVALIDVGKLSDAPLNTQ. A helical membrane pass occupies residues 253–281; it reads WLYLILGIIFGIFGPIFNKWVLGMQDLLH. Over 282–287 the chain is Cytoplasmic; it reads RVHGGN. A helical membrane pass occupies residues 288–309; it reads ITKWVLMGGAIGGLCGLLGFVA. At 310–329 the chain is on the periplasmic side; the sequence is PATSGGGFNLIPIATAGNFS. Transmembrane regions (helical) follow at residues 330 to 349 and 355 to 376; these read MGMLVFIFVARVITTLLCFS and GIFAPMLALGTVLGTAFGMVVV. The Selectivity filter part_3 signature appears at 355-359; that stretch reads GIFAP. The chloride site is built by Ile-356 and Phe-357. Over 377-386 the chain is Periplasmic; it reads ELFPQYHLEA. The segment at residues 387–401 is an intramembrane region (helical); the sequence is GTFAIAGMGALLAAS. An intramembrane region (note=Loop between two helices) is located at residues 402–404; sequence IRA. An intramembrane region (helical) is located at residues 405-416; sequence PLTGIILVLEMT. The note=Loop between two helices intramembrane region spans 417-421; that stretch reads DNYQL. Residues 422-438 form a helical membrane-spanning segment; that stretch reads ILPMIITGLGATLLAQF. The Cytoplasmic portion of the chain corresponds to 439–473; the sequence is TGGKPLYSAILARTLAKQEAEQLARSKAASASENT. A chloride-binding site is contributed by Tyr-445.

This sequence belongs to the chloride channel (TC 2.A.49) family. ClcA subfamily. In terms of assembly, homodimer.

It localises to the cell inner membrane. It carries out the reaction 2 chloride(in) + H(+)(out) = 2 chloride(out) + H(+)(in). Its function is as follows. Proton-coupled chloride transporter. Functions as antiport system and exchanges two chloride ions for 1 proton. Probably acts as an electrical shunt for an outwardly-directed proton pump that is linked to amino acid decarboxylation, as part of the extreme acid resistance (XAR) response. This chain is H(+)/Cl(-) exchange transporter ClcA, found in Shigella boydii serotype 18 (strain CDC 3083-94 / BS512).